Consider the following 293-residue polypeptide: Nucleotide-binding protein LBA0691 (293 aa).

13-20 (GMSGAGKT) serves as a coordination point for ATP. Residue 63 to 66 (DLRV) coordinates GTP.

It belongs to the RapZ-like family.

Functionally, displays ATPase and GTPase activities. The chain is Nucleotide-binding protein LBA0691 from Lactobacillus acidophilus (strain ATCC 700396 / NCK56 / N2 / NCFM).